The following is a 238-amino-acid chain: MEMTDFELTSNSQSNLAIPTNFKSTLPPRKRAKTKEEKEQRRIERILRNRRAAHQSREKKRLHLQYLERKCSLLENLLNSVNLEKLADHEDALTCSHDAFVASLDEYRDFQSTRGASLDTRASSHSSSDTFTPSPLNCTMEPATLSPKSMRDSASDQETSWELQMFKTENVPESTTLPAVDNNNLFDAVASPLADPLCDDIAGNSLPFDNSIDLDNWRNPEAQSGLNSFELNDFFITS.

Residues 1-39 (MEMTDFELTSNSQSNLAIPTNFKSTLPPRKRAKTKEEKE) form a disordered region. Over residues 7–24 (ELTSNSQSNLAIPTNFKS) the composition is skewed to polar residues. Positions 39–102 (EQRRIERILR…LTCSHDAFVA (64 aa)) constitute a bZIP domain. The basic motif stretch occupies residues 41 to 61 (RRIERILRNRRAAHQSREKKR). The tract at residues 67–74 (LERKCSLL) is leucine-zipper. The segment at 115-152 (GASLDTRASSHSSSDTFTPSPLNCTMEPATLSPKSMRD) is disordered. A compositionally biased stretch (low complexity) spans 117 to 134 (SLDTRASSHSSSDTFTPS).

Belongs to the bZIP family. Homodimer.

It localises to the nucleus. In terms of biological role, transcriptional activator involved in the unfolded protein response (UPR) pathway. Recognizes and binds to the UPR element (UPRE) in the promoter of UPR-regulated genes such as KAR2, PDI1, EUG1 and FKB2. Increases the synthesis of endoplasmic reticulum-resident proteins required for protein folding as well as components of the secretory pathway. In Saccharomyces cerevisiae (strain ATCC 204508 / S288c) (Baker's yeast), this protein is Transcriptional activator HAC1 (HAC1).